The sequence spans 279 residues: Urease accessory protein UreD (279 aa).

This sequence belongs to the UreD family. As to quaternary structure, ureD, UreF and UreG form a complex that acts as a GTP-hydrolysis-dependent molecular chaperone, activating the urease apoprotein by helping to assemble the nickel containing metallocenter of UreC. The UreE protein probably delivers the nickel.

It is found in the cytoplasm. Functionally, required for maturation of urease via the functional incorporation of the urease nickel metallocenter. The protein is Urease accessory protein UreD of Pseudomonas fluorescens (strain ATCC BAA-477 / NRRL B-23932 / Pf-5).